Consider the following 1159-residue polypeptide: CRISPR-associated endoribonuclease Cas13a (1159 aa).

The segment at 1–11 is binds crRNA repeat and spacer; it reads MKVTKVGGISH. An NTD region spans residues 1 to 170; sequence MKVTKVGGIS…NNIEKVEGKS (170 aa). Binds crRNA repeat regions lie at residues 139–151, 172–176, 224–233, 271–276, 294–297, and 301–305; these read NKIN…FEKN, RNIIY, REFYHEIIGR, QVFYKY, HFVE, and SQLLK. The interval 171 to 360 is helical-1; the sequence is KRNIIYDYYR…YNYYLQDGEI (190 aa). Residues 319 to 328 form a binds crRNA processing site region; that stretch reads KIKRIFEYQN. Binds crRNA repeat stretches follow at residues 336-340 and 371-378; these read KLLNK and QNEAFLRN. The segment at 361–508 is HEPN-like fold 1-I; that stretch reads ATSDFIARNR…SKKMFQNEIN (148 aa). Active-site for target RNA cleavage residues include R472 and H477. The segment at 509–751 is helical-2; it reads EKKLKLKIFR…EFLREIKLGN (243 aa). The interval 519-522 is binds target RNA; sequence QLNS. A binds crRNA spacer region spans residues 547-558; the sequence is NKNIPFVPSFTK. The tract at residues 590–597 is binds target RNA; it reads DAQIYLLK. The segment at 718 to 722 is binds crRNA spacer; the sequence is KQEFD. The tract at residues 752 to 813 is HEPN-like fold 1-II; that stretch reads ILKYTERLNM…NLDNNRVTED (62 aa). The segment at 780–783 is binds crRNA repeat; sequence SLEK. The tract at residues 804–810 is binds crRNA spacer and target RNA; that stretch reads NLDNNRV. The segment at 814–946 is linker; it reads FELEADEIGK…EYTHLKNKVE (133 aa). Binds crRNA spacer regions lie at residues 845-857 and 938-942; these read KIYF…IKHR and YTHLK. Residues 880–946 are a coiled coil; it reads YKISIEELKK…EYTHLKNKVE (67 aa). Residues 947 to 1159 form an HEPN-like fold 2 region; it reads FNELNLLQGL…YKMEEKKSEN (213 aa). The interval 962-963 is binds crRNA repeat; it reads HR. Positions 995–998 are binds 3'-end of target RNA, in adjacent protein; it reads FENK. Residues R1048 and H1053 each act as for target RNA cleavage in the active site. Binds crRNA processing site regions lie at residues 1072-1082 and 1104-1108; these read RKLLSYDRKLK and IGADK.

The protein belongs to the CRISPR-associated endoribonuclease Cas13a family. In terms of assembly, crystals show the 3'-end of target RNA interacting with an adjacent protein molecule, and mutagenesis of those amino acid residues decreases target RNA cleavage, but it is not clear if this is physiological. Requires a divalent metal cation as cofactor.

With respect to regulation, target RNA acts as an activator for non-specific ssRNA cleavage; the target RNA and complementary crRNA must both be at least 20 nucleotides long to activate the HEPN-like catalytic pocket for RNase activity. Functionally, CRISPR (clustered regularly interspaced short palindromic repeat), is an adaptive immune system that provides protection against mobile genetic elements (viruses, transposable elements and conjugative plasmids). CRISPR clusters contain sequences complementary to antecedent mobile elements (spacer sequences) and target invading nucleic acids. Unlike many single-component effectors, this CRISPR-Cas system targets RNA. CRISPR clusters are transcribed from pre-CRISPR RNA (crRNA) and processed into crRNA by this protein. pre-crRNA processing yields a 5'-OH and probably a 2',3'-cyclic phosphate. Also cleaves pre-crRNA from several other type VI-A CRISPR systems. Cleaves linear target ssRNA in a crRNA-dependent fashion, preferentially before U residues. Cleavage of target ssRNA is about 80-fold faster than pre-crRNA processing and uses a different active site. Binding a viable target RNA target activates this protein for non-specific RNA degradation in vitro (called collateral RNA degradation). Activation occurs with 10 fM target RNA. crRNA maturation is not essential for activation of RNA degradation, but lack of mature crRNA (due to mutagenesis) decreases activation levels. This system has a 3' protospacer flanking site in the target RNA (PFS), which is C and unavailable to base pair with crRNA (PFS is equivalent to PAM, the protospacer adjacent motif). In Leptotrichia buccalis (strain ATCC 14201 / DSM 1135 / JCM 12969 / NCTC 10249 / C-1013-b), this protein is CRISPR-associated endoribonuclease Cas13a.